Here is an 86-residue protein sequence, read N- to C-terminus: Probable protein BRICK1 (86 aa).

The stretch at 47–81 (EATTKSKLASLNEKLDILERKLEVLEVQVSSATTN) forms a coiled coil.

This sequence belongs to the BRK1 family. Binds SCAR.

The protein resides in the cytoplasm. It is found in the cytoskeleton. Involved in regulation of actin and microtubule organization. Part of a WAVE complex that activates the Arp2/3 complex. The protein is Probable protein BRICK1 of Oryza sativa subsp. japonica (Rice).